An 81-amino-acid polypeptide reads, in one-letter code: Adipogenin (81 aa).

A helical transmembrane segment spans residues 16-36; the sequence is FLVFWLCLPVALLLFLLIIWL.

The protein belongs to the adipogenin family. As to expression, highly expressed in subcutaneous, perirenal and mesecentric adipose tissue.

Its subcellular location is the membrane. It localises to the nucleus. Its function is as follows. Plays a role in stimulating adipocyte differentiation and development. In Bos taurus (Bovine), this protein is Adipogenin.